Reading from the N-terminus, the 601-residue chain is MPFKAFDTFKEKILKPGKEGVKNAVGDSLGILQRKIDGTNEEEDAIELNEEGRPVQTSRAHRPVCDCSCCGIPKRYICDCSCCGIPKRYIIAVMSGLGFCISFGIRCNLGVAIVEMVNNSTVYVDGKPEIQTAQFNWDPETVGLIHGSFFWGYIVTQIPGGFISNKFAASRVFGAAIFLTSTLNMFIPSAARVHYGCVMGVRILQGLVEGVTYPACHGMWSKWAPPLERSRLATTSFCGSYAGAVVAMPLAGVLVQYIGWASVFYIYGMFGIIWYMFWLLQAYECPAAHPTISNAERTYIETSIGEGANLASLSKFNTPWRRFFTSLPVYAIIVANFCRSWTFYLLLISQPAYFEEVFGFAISKVGLLSAVPHMVMTIVVPIGGQLADYLRSRKILTTTAVRKIMNCGGFGMEATLLLVVGFSHTKGVAISFLVLAVGFSGFAISGFNVNHLDIAPRYASILMGISNGVGTLSGMVCPLIVGAMTKHKTREEWQNVFLIAALVHYSGVIFYGVFASGEKQDWADPENLSEDKCGIIDQDELAEETELNHETFVSPRKKMSYGATTQNCEVQKTEWRQQRESAFDGEEPLSYQAEGDFSETS.

Residues Met1–Tyr89 are Cytoplasmic-facing. A helical membrane pass occupies residues Ile90–Gly110. The Vesicular portion of the chain corresponds to Val111–Gly143. Asn119 is a glycosylation site (N-linked (GlcNAc...) asparagine). Residues Leu144 to Ser164 traverse the membrane as a helical segment. Residues Asn165 to Lys166 lie on the Cytoplasmic side of the membrane. The helical transmembrane segment at Phe167–Ile187 threads the bilayer. The Vesicular segment spans residues Pro188–Tyr195. The chain crosses the membrane as a helical span at residues Gly196–Cys216. Over His217–Thr234 the chain is Cytoplasmic. A helical membrane pass occupies residues Thr235–Val255. Residues Gln256–Ser262 are Vesicular-facing. A helical transmembrane segment spans residues Val263–Tyr283. Residues Glu284–Leu327 lie on the Cytoplasmic side of the membrane. Residues Pro328–Ile348 traverse the membrane as a helical segment. Over Ser349 to Gly366 the chain is Vesicular. Residues Leu367–Ala387 traverse the membrane as a helical segment. Residues Asp388–Lys403 are Cytoplasmic-facing. Residues Ile404–His424 form a helical membrane-spanning segment. At Thr425–Lys426 the chain is on the vesicular side. A helical membrane pass occupies residues Gly427 to Phe447. Over Asn448–Ser460 the chain is Cytoplasmic. Residues Ile461–Val481 form a helical membrane-spanning segment. Residues Gly482–Gln494 lie on the Vesicular side of the membrane. Residues Asn495–Ala515 form a helical membrane-spanning segment. Residues Ser516–Ser598 are Cytoplasmic-facing. The segment at Arg576–Ser601 is disordered.

This sequence belongs to the major facilitator superfamily. Sodium/anion cotransporter family. VGLUT subfamily. In terms of tissue distribution, expressed in restricted areas of the brain. Highest expression is found in the neurons of the basal forebrain, the hippocampal formation, and the majority of the neurons of the mesencephalic raphe nuclei. Expressed in inner hair cells of the ear.

It localises to the cytoplasmic vesicle. The protein resides in the secretory vesicle. Its subcellular location is the synaptic vesicle membrane. The protein localises to the cell membrane. It is found in the synapse. It localises to the synaptosome. The catalysed reaction is L-glutamate(out) = L-glutamate(in). The enzyme catalyses 3 Na(+)(out) + phosphate(out) = 3 Na(+)(in) + phosphate(in). It carries out the reaction chloride(in) = chloride(out). The L-glutamate uniporter activity exhibits a biphasic dependence on chloride concentration. Chloride channel activity is allosterically activated by lumenal H(+) and Cl(-) leading to synaptic vesicles acidification. The L-glutamate transport activity is allosterically activated by lumenal H(+) and Cl(-), preventing non-vesicular L-glutamate release. Its function is as follows. Multifunctional transporter that transports L-glutamate as well as multiple ions such as chloride, sodium and phosphate. At the synaptic vesicle membrane, mainly functions as an uniporter that mediates the uptake of L-glutamate into synaptic vesicles at presynaptic nerve terminals of excitatory neural cells. The L-glutamate uniporter activity is electrogenic and is driven by the proton electrochemical gradient, mainly by the electrical gradient established by the vacuolar H(+)-ATPase across the synaptic vesicle membrane. In addition, functions as a chloride channel that allows a chloride permeation through the synaptic vesicle membrane that affects the proton electrochemical gradient and promotes synaptic vesicles acidification. At the plasma membrane, following exocytosis, functions as a symporter of Na(+) and phosphate from the extracellular space to the cytoplasm allowing synaptic phosphate homeostasis regulation. The symporter activity is electrogenic. Moreover, operates synergistically with SLC18A3/VACHT under a constant H(+) gradient, thereby allowing striatal vesicular acetylcholine uptake. The chain is Vesicular glutamate transporter 3 from Mus musculus (Mouse).